Consider the following 422-residue polypeptide: Gamma-glutamyl phosphate reductase (422 aa).

The protein belongs to the gamma-glutamyl phosphate reductase family.

The protein resides in the cytoplasm. The enzyme catalyses L-glutamate 5-semialdehyde + phosphate + NADP(+) = L-glutamyl 5-phosphate + NADPH + H(+). Its pathway is amino-acid biosynthesis; L-proline biosynthesis; L-glutamate 5-semialdehyde from L-glutamate: step 2/2. Catalyzes the NADPH-dependent reduction of L-glutamate 5-phosphate into L-glutamate 5-semialdehyde and phosphate. The product spontaneously undergoes cyclization to form 1-pyrroline-5-carboxylate. In Chlorobium phaeovibrioides (strain DSM 265 / 1930) (Prosthecochloris vibrioformis (strain DSM 265)), this protein is Gamma-glutamyl phosphate reductase.